Here is a 380-residue protein sequence, read N- to C-terminus: O-phospho-L-seryl-tRNA:Cys-tRNA synthase (380 aa).

Residues 86 to 87 (AR), Asn-192, and 215 to 217 (SGH) contribute to the pyridoxal 5'-phosphate site. The residue at position 218 (Lys-218) is an N6-(pyridoxal phosphate)lysine.

The protein belongs to the SepCysS family. As to quaternary structure, homodimer. Interacts with SepRS. Pyridoxal 5'-phosphate serves as cofactor.

It carries out the reaction O-phospho-L-seryl-tRNA(Cys) + hydrogen sulfide + H(+) = L-cysteinyl-tRNA(Cys) + phosphate. Converts O-phospho-L-seryl-tRNA(Cys) (Sep-tRNA(Cys)) to L-cysteinyl-tRNA(Cys) (Cys-tRNA(Cys)). The sequence is that of O-phospho-L-seryl-tRNA:Cys-tRNA synthase from Methanococcus maripaludis (strain C7 / ATCC BAA-1331).